Here is a 1241-residue protein sequence, read N- to C-terminus: ATP-dependent helicase/nuclease subunit A (1241 aa).

The region spanning 12–485 (SQWTDDQWKA…IDLAKNFRSR (474 aa)) is the UvrD-like helicase ATP-binding domain. 33–40 (AAAGSGKT) is a binding site for ATP. The 301-residue stretch at 505–805 (GEIDYDADAE…RIMTIHKSKG (301 aa)) folds into the UvrD-like helicase C-terminal domain.

It belongs to the helicase family. AddA subfamily. In terms of assembly, heterodimer of AddA and AddB/RexB. The cofactor is Mg(2+).

The catalysed reaction is Couples ATP hydrolysis with the unwinding of duplex DNA by translocating in the 3'-5' direction.. The enzyme catalyses ATP + H2O = ADP + phosphate + H(+). The heterodimer acts as both an ATP-dependent DNA helicase and an ATP-dependent, dual-direction single-stranded exonuclease. Recognizes the chi site generating a DNA molecule suitable for the initiation of homologous recombination. The AddA nuclease domain is required for chi fragment generation; this subunit has the helicase and 3' -&gt; 5' nuclease activities. This chain is ATP-dependent helicase/nuclease subunit A, found in Bacillus cereus (strain Q1).